We begin with the raw amino-acid sequence, 484 residues long: tRNA sulfurtransferase (484 aa).

The THUMP domain occupies 63–167; sequence EAFAERLACI…NDNLYLIDKR (105 aa). ATP contacts are provided by residues 185–186, Lys267, Gly289, and Gln298; that span reads LI. Cysteines 346 and 458 form a disulfide. The region spanning 406 to 484 is the Rhodanese domain; it reads ISAGEIIIDV…GYNNVKVYRP (79 aa). Cys458 serves as the catalytic Cysteine persulfide intermediate.

Belongs to the ThiI family.

The protein localises to the cytoplasm. The catalysed reaction is [ThiI sulfur-carrier protein]-S-sulfanyl-L-cysteine + a uridine in tRNA + 2 reduced [2Fe-2S]-[ferredoxin] + ATP + H(+) = [ThiI sulfur-carrier protein]-L-cysteine + a 4-thiouridine in tRNA + 2 oxidized [2Fe-2S]-[ferredoxin] + AMP + diphosphate. It carries out the reaction [ThiS sulfur-carrier protein]-C-terminal Gly-Gly-AMP + S-sulfanyl-L-cysteinyl-[cysteine desulfurase] + AH2 = [ThiS sulfur-carrier protein]-C-terminal-Gly-aminoethanethioate + L-cysteinyl-[cysteine desulfurase] + A + AMP + 2 H(+). It functions in the pathway cofactor biosynthesis; thiamine diphosphate biosynthesis. Functionally, catalyzes the ATP-dependent transfer of a sulfur to tRNA to produce 4-thiouridine in position 8 of tRNAs, which functions as a near-UV photosensor. Also catalyzes the transfer of sulfur to the sulfur carrier protein ThiS, forming ThiS-thiocarboxylate. This is a step in the synthesis of thiazole, in the thiamine biosynthesis pathway. The sulfur is donated as persulfide by IscS. This Shewanella pealeana (strain ATCC 700345 / ANG-SQ1) protein is tRNA sulfurtransferase.